Here is a 160-residue protein sequence, read N- to C-terminus: Nucleotide-binding protein Ping_2261 (160 aa).

The protein belongs to the YajQ family.

Functionally, nucleotide-binding protein. The sequence is that of Nucleotide-binding protein Ping_2261 from Psychromonas ingrahamii (strain DSM 17664 / CCUG 51855 / 37).